Here is a 301-residue protein sequence, read N- to C-terminus: Protoheme IX farnesyltransferase (301 aa).

9 consecutive transmembrane segments (helical) span residues 16–36, 41–61, 93–113, 114–134, 141–161, 172–192, 217–237, 238–258, and 273–293; these read VVALIVFTALVGMFLAIPGIP, IQSGALGFLGIWLAAAAAAAI, VFAGVLITLSMTILTLGVNLI, TAVLTFTSLIGYAVIYTVYLK, IVIGGLAGAMPPMLGWAAVTG, SLLVAIIFVWTPPHFWALAIF, QILLYTVILSVVTLLPVATGM, SGVFYLGAALVLDAVFLWYAW, and FGYSIVYLMALFAFLMFDHWL.

The protein belongs to the UbiA prenyltransferase family. Protoheme IX farnesyltransferase subfamily.

The protein localises to the cell inner membrane. It carries out the reaction heme b + (2E,6E)-farnesyl diphosphate + H2O = Fe(II)-heme o + diphosphate. The protein operates within porphyrin-containing compound metabolism; heme O biosynthesis; heme O from protoheme: step 1/1. Converts heme B (protoheme IX) to heme O by substitution of the vinyl group on carbon 2 of heme B porphyrin ring with a hydroxyethyl farnesyl side group. This chain is Protoheme IX farnesyltransferase, found in Xylella fastidiosa (strain 9a5c).